The primary structure comprises 114 residues: Large ribosomal subunit protein uL18 (114 aa).

It belongs to the universal ribosomal protein uL18 family. Part of the 50S ribosomal subunit; part of the 5S rRNA/L5/L18/L25 subcomplex. Contacts the 5S and 23S rRNAs.

Its function is as follows. This is one of the proteins that bind and probably mediate the attachment of the 5S RNA into the large ribosomal subunit, where it forms part of the central protuberance. This is Large ribosomal subunit protein uL18 from Porphyromonas gingivalis (strain ATCC BAA-308 / W83).